Reading from the N-terminus, the 173-residue chain is Protein GrpE (173 aa).

It belongs to the GrpE family. As to quaternary structure, homodimer.

It is found in the cytoplasm. Participates actively in the response to hyperosmotic and heat shock by preventing the aggregation of stress-denatured proteins, in association with DnaK and GrpE. It is the nucleotide exchange factor for DnaK and may function as a thermosensor. Unfolded proteins bind initially to DnaJ; upon interaction with the DnaJ-bound protein, DnaK hydrolyzes its bound ATP, resulting in the formation of a stable complex. GrpE releases ADP from DnaK; ATP binding to DnaK triggers the release of the substrate protein, thus completing the reaction cycle. Several rounds of ATP-dependent interactions between DnaJ, DnaK and GrpE are required for fully efficient folding. In Campylobacter fetus subsp. fetus (strain 82-40), this protein is Protein GrpE.